The primary structure comprises 208 residues: FMN-dependent NADH:quinone oxidoreductase (208 aa).

Residues Ser9, 15-17 (SVS), 96-99 (MYNF), and 140-143 (TRGG) each bind FMN.

This sequence belongs to the azoreductase type 1 family. Homodimer. FMN serves as cofactor.

The enzyme catalyses 2 a quinone + NADH + H(+) = 2 a 1,4-benzosemiquinone + NAD(+). The catalysed reaction is N,N-dimethyl-1,4-phenylenediamine + anthranilate + 2 NAD(+) = 2-(4-dimethylaminophenyl)diazenylbenzoate + 2 NADH + 2 H(+). Quinone reductase that provides resistance to thiol-specific stress caused by electrophilic quinones. Functionally, also exhibits azoreductase activity. Catalyzes the reductive cleavage of the azo bond in aromatic azo compounds to the corresponding amines. This chain is FMN-dependent NADH:quinone oxidoreductase, found in Azospirillum brasilense.